The following is a 566-amino-acid chain: MSDSTGYAVNDLVWAKMKGFSPWPGRISVPPAELRKIAVKKNNPVKCIFFFGSNNYAWIEETQIKPYLQFKDTHLNSSKSAQFKEALKQIEEFRVNPEKFQPLFVGENEAANRPDPDEEFNRLREGVASGTEESGAEDGASVNNTTTPAVLESVDEATSTPMVKKSAKKKVRASLPIKLNVDKVVCESIITFQCSPRSVGNKAKAMLDDGVSGAPSPKRKKKLLNDSGELSSLDASPVRRNAPVTHLLNRPVTVTRPETPEIDMSSVSNAVQSRNIKASQLKFGFLGLGVMGCGIVKNLIKSGHSVVVWNRSAHKCRKFQEVGAEVADTPSDVVEMTDVTYSCVSDPQVAKDMVFGNCGVMSANLAGKGYVEMTGVDPETSNDINEAIISKGGRYLEAQIQGSKNQAEEGTLIILASGDRLLFEECQSCFEAISRNSFYLGDVGNATKMNLILQMISGITLAGVAEAMALADRAGLQQKDVLEVLELTNMSSEMMLQKGNAIIKGEFPTHHALKHMQKDLKLALSLADGLEQSLPITAASNEVYKHAKRLGYGSHDASAVYVRARF.

In terms of domain architecture, PWWP spans 9–70; that stretch reads VNDLVWAKMK…ETQIKPYLQF (62 aa). Disordered regions lie at residues 127-147 and 206-234; these read VASG…NTTT and MLDD…SSLD. The segment at 274–566 is dehydrogenase domain; sequence RNIKASQLKF…ASAVYVRARF (293 aa). NAD(+) contacts are provided by residues 284–298 and Lys518; that span reads GFLG…IVKN.

Belongs to the HIBADH-related family. NP60 subfamily. In terms of assembly, binds to mononucleosomes. Interacts with male-specific lethal (MSL) histone acetyltransferase complex at least composed of mof, msl-1, msl-2 and msl-3.

The protein localises to the chromosome. Functionally, may have oxidoreductase activity. The sequence is that of Cytokine-like nuclear factor N-PAC from Anopheles gambiae (African malaria mosquito).